The chain runs to 453 residues: Trigger factor (453 aa).

One can recognise a PPIase FKBP-type domain in the interval 171 to 256; the sequence is GDRITISFKG…VSLIEAPEEL (86 aa).

The protein belongs to the FKBP-type PPIase family. Tig subfamily.

It is found in the cytoplasm. The enzyme catalyses [protein]-peptidylproline (omega=180) = [protein]-peptidylproline (omega=0). Its function is as follows. Involved in protein export. Acts as a chaperone by maintaining the newly synthesized protein in an open conformation. Functions as a peptidyl-prolyl cis-trans isomerase. The sequence is that of Trigger factor from Nitrobacter winogradskyi (strain ATCC 25391 / DSM 10237 / CIP 104748 / NCIMB 11846 / Nb-255).